The chain runs to 60 residues: Mastoparan-A (60 aa).

An N-terminal signal peptide occupies residues 1-27; that stretch reads MKNTILILFTAFIALLGFFGMSAEALA. AXPX repeat units follow at residues 27-30, 31-34, 35-38, and 41-43; these read ADPI, ADPL, AGPN, and ADP. Residues 28–45 constitute a propeptide that is removed on maturation; that stretch reads DPIADPLAGPNAEADPEA. Position 59 is an isoleucine amide (Ile-59).

The protein belongs to the MCD family. Mastoparan subfamily. Expressed by the venom gland.

Its subcellular location is the secreted. The protein resides in the target cell membrane. Functionally, antimicrobial and mast cell degranulating peptide. Has broad spectrum antibacterial activity against both Gram-positive and Gram-negative bacteria (S.aureus MIC=32-64 ug/ml, S.xylosus MIC=2 ug/ml, S.alactolyticus MIC=12 ug/ml, C.koseri MIC=4 ug/ml, E.coli MIC=8 ug/ml, K.pneumoniae MIC=32 ug/ml, P.aerugiosa MIC=192 ug/ml, S.choleraesuis MIC=32 ug/ml, S.typhimurium MIC=32 ug/ml, V.parahamelytics MIC=16 ug/ml). Affects membrane permeability of E.coli. Shows hemolytic activities on sheep, chicken and human erythrocytes. Its mast cell degranulation activity may be related to the activation of G-protein coupled receptors in mast cells as well as interaction with other proteins located in cell endosomal membranes in the mast cells. The chain is Mastoparan-A from Vespa analis (Yellow-vented hornet).